Reading from the N-terminus, the 274-residue chain is 2,3,4,5-tetrahydropyridine-2,6-dicarboxylate N-succinyltransferase (274 aa).

Residues arginine 104 and aspartate 141 each contribute to the substrate site.

The protein belongs to the transferase hexapeptide repeat family. Homotrimer.

The protein localises to the cytoplasm. The enzyme catalyses (S)-2,3,4,5-tetrahydrodipicolinate + succinyl-CoA + H2O = (S)-2-succinylamino-6-oxoheptanedioate + CoA. It functions in the pathway amino-acid biosynthesis; L-lysine biosynthesis via DAP pathway; LL-2,6-diaminopimelate from (S)-tetrahydrodipicolinate (succinylase route): step 1/3. The polypeptide is 2,3,4,5-tetrahydropyridine-2,6-dicarboxylate N-succinyltransferase (Idiomarina loihiensis (strain ATCC BAA-735 / DSM 15497 / L2-TR)).